A 182-amino-acid chain; its full sequence is Putative adenylate kinase (182 aa).

ATP-binding residues include Gly-10, Gly-12, Lys-13, Thr-14, and Ser-15. Residues 30–53 (HLNEMIKEEHLYTEVDEVRDAVIA) are NMP. The segment at 104–114 (ARGYSEEKIRE) is LID. The ATP site is built by Arg-105 and Lys-143.

It belongs to the adenylate kinase family. AK6 subfamily. In terms of assembly, interacts with uS11. Not a structural component of 40S pre-ribosomes, but transiently interacts with them by binding to uS11.

It catalyses the reaction AMP + ATP = 2 ADP. The enzyme catalyses ATP + H2O = ADP + phosphate + H(+). In terms of biological role, broad-specificity nucleoside monophosphate (NMP) kinase that catalyzes the reversible transfer of the terminal phosphate group between nucleoside triphosphates and monophosphates. Also has ATPase activity. Involved in the late maturation steps of the 30S ribosomal particles, specifically 16S rRNA maturation. While NMP activity is not required for ribosome maturation, ATPase activity is. Associates transiently with small ribosomal subunit protein uS11. ATP hydrolysis breaks the interaction with uS11. May temporarily remove uS11 from the ribosome to enable a conformational change of the ribosomal RNA that is needed for the final maturation step of the small ribosomal subunit. The sequence is that of Putative adenylate kinase from Methanosarcina barkeri (strain Fusaro / DSM 804).